A 290-amino-acid polypeptide reads, in one-letter code: Elongation factor Ts (290 aa).

An involved in Mg(2+) ion dislocation from EF-Tu region spans residues 81-84 (TDFV).

Belongs to the EF-Ts family.

The protein localises to the cytoplasm. Its function is as follows. Associates with the EF-Tu.GDP complex and induces the exchange of GDP to GTP. It remains bound to the aminoacyl-tRNA.EF-Tu.GTP complex up to the GTP hydrolysis stage on the ribosome. This Saccharophagus degradans (strain 2-40 / ATCC 43961 / DSM 17024) protein is Elongation factor Ts.